Reading from the N-terminus, the 71-residue chain is Prophage lysis protein S homolog EssD (71 aa).

This sequence belongs to the lambda phage S protein family.

The polypeptide is Prophage lysis protein S homolog EssD (essD) (Escherichia coli (strain K12)).